The chain runs to 292 residues: tRNA-cytidine(32) 2-sulfurtransferase (292 aa).

A PP-loop motif motif is present at residues Ser-62 to Ser-67. Cys-137, Cys-140, and Cys-228 together coordinate [4Fe-4S] cluster.

It belongs to the TtcA family. As to quaternary structure, homodimer. Mg(2+) is required as a cofactor. The cofactor is [4Fe-4S] cluster.

It is found in the cytoplasm. It carries out the reaction cytidine(32) in tRNA + S-sulfanyl-L-cysteinyl-[cysteine desulfurase] + AH2 + ATP = 2-thiocytidine(32) in tRNA + L-cysteinyl-[cysteine desulfurase] + A + AMP + diphosphate + H(+). It functions in the pathway tRNA modification. Functionally, catalyzes the ATP-dependent 2-thiolation of cytidine in position 32 of tRNA, to form 2-thiocytidine (s(2)C32). The sulfur atoms are provided by the cysteine/cysteine desulfurase (IscS) system. The polypeptide is tRNA-cytidine(32) 2-sulfurtransferase (Brucella anthropi (strain ATCC 49188 / DSM 6882 / CCUG 24695 / JCM 21032 / LMG 3331 / NBRC 15819 / NCTC 12168 / Alc 37) (Ochrobactrum anthropi)).